The chain runs to 337 residues: Phenylalanine--tRNA ligase alpha subunit (337 aa).

Glutamate 258 lines the Mg(2+) pocket.

This sequence belongs to the class-II aminoacyl-tRNA synthetase family. Phe-tRNA synthetase alpha subunit type 1 subfamily. Tetramer of two alpha and two beta subunits. The cofactor is Mg(2+).

The protein localises to the cytoplasm. The catalysed reaction is tRNA(Phe) + L-phenylalanine + ATP = L-phenylalanyl-tRNA(Phe) + AMP + diphosphate + H(+). This Burkholderia mallei (strain ATCC 23344) protein is Phenylalanine--tRNA ligase alpha subunit.